The primary structure comprises 168 residues: Transcriptional regulator MraZ (168 aa).

SpoVT-AbrB domains lie at 8–51 (EYNQ…GGDR) and 90–140 (ALNM…KADI).

It belongs to the MraZ family. Forms oligomers.

The protein localises to the cytoplasm. The protein resides in the nucleoid. The sequence is that of Transcriptional regulator MraZ from Cereibacter sphaeroides (strain KD131 / KCTC 12085) (Rhodobacter sphaeroides).